The primary structure comprises 92 residues: UPF0473 protein BC_4380 (92 aa).

Belongs to the UPF0473 family.

This is UPF0473 protein BC_4380 from Bacillus cereus (strain ATCC 14579 / DSM 31 / CCUG 7414 / JCM 2152 / NBRC 15305 / NCIMB 9373 / NCTC 2599 / NRRL B-3711).